A 367-amino-acid chain; its full sequence is tRNA-specific 2-thiouridylase MnmA (367 aa).

ATP is bound by residues 12–19 (GMSGGVDS) and M38. The interaction with target base in tRNA stretch occupies residues 98-100 (NPD). Residue C103 is the Nucleophile of the active site. A disulfide bond links C103 and C200. Residue G128 participates in ATP binding. The interval 150–152 (KDQ) is interaction with tRNA. C200 (cysteine persulfide intermediate) is an active-site residue. An interaction with tRNA region spans residues 312 to 313 (RY).

Belongs to the MnmA/TRMU family. As to quaternary structure, interacts with TusE.

The protein localises to the cytoplasm. The catalysed reaction is S-sulfanyl-L-cysteinyl-[protein] + uridine(34) in tRNA + AH2 + ATP = 2-thiouridine(34) in tRNA + L-cysteinyl-[protein] + A + AMP + diphosphate + H(+). In terms of biological role, catalyzes the 2-thiolation of uridine at the wobble position (U34) of tRNA(Lys), tRNA(Glu) and tRNA(Gln), leading to the formation of s(2)U34, the first step of tRNA-mnm(5)s(2)U34 synthesis. Sulfur is provided by IscS, via a sulfur-relay system. Binds ATP and its substrate tRNAs. This chain is tRNA-specific 2-thiouridylase MnmA, found in Proteus mirabilis (strain HI4320).